Consider the following 288-residue polypeptide: Cyclin-dependent kinase 2 homolog (288 aa).

Residues 4–284 enclose the Protein kinase domain; it reads YHGLEKIGEG…AKQAIEHPYF (281 aa). Residues 10 to 18 and K32 each bind ATP; that span reads IGEGTYGVV. T14 bears the Phosphothreonine mark. Y15 is subject to Phosphotyrosine. Catalysis depends on D125, which acts as the Proton acceptor. Position 158 is a phosphothreonine (T158).

Belongs to the protein kinase superfamily. CMGC Ser/Thr protein kinase family. CDC2/CDKX subfamily. May form a complex composed of at least the catalytic subunit CRK2 and a cyclin. Mg(2+) is required as a cofactor.

It is found in the cytoplasm. It carries out the reaction L-seryl-[protein] + ATP = O-phospho-L-seryl-[protein] + ADP + H(+). The enzyme catalyses L-threonyl-[protein] + ATP = O-phospho-L-threonyl-[protein] + ADP + H(+). It catalyses the reaction [DNA-directed RNA polymerase] + ATP = phospho-[DNA-directed RNA polymerase] + ADP + H(+). Its activity is regulated as follows. Phosphorylation at Thr-14 or Tyr-15 inactivates the enzyme, while phosphorylation at Thr-158 activates it. In terms of biological role, serine/threonine-protein kinase. Involved in the control of the cell cycle. Required for entry into S-phase and mitosis. Probable component of the kinase complex that phosphorylates the repetitive C-terminus of RNA polymerase II. The chain is Cyclin-dependent kinase 2 homolog from Plasmodium berghei (strain Anka).